Reading from the N-terminus, the 626-residue chain is Ankyrin repeat domain-containing protein 13B (626 aa).

M1 carries the post-translational modification N-acetylmethionine. 2 ANK repeats span residues 47 to 76 (RGRTPLHLATTLGHLECARVLLAHGADVGR) and 80 to 109 (SGWTVLQEAVSTRDLELVQLVLRYRDYQRV). The tract at residues 442–474 (PVPSVRGSPSSETPSPGSDSSSVSSSSSTTSCR) is disordered. Residues 449-472 (SPSSETPSPGSDSSSVSSSSSTTS) show a composition bias toward low complexity. In terms of domain architecture, UIM 1 spans 503 to 522 (DDDDLLQFAIQQSLLEAGSE). Disordered regions lie at residues 534–590 (NSKP…DEQL) and 595–614 (ELSAQEQEERRRRARQEEEE). The span at 554-573 (PPTPQRQPAPPASVPSPRPS) shows a compositional bias: pro residues. 2 UIM domains span residues 585–604 (SYDEQLRLAMELSAQEQEER) and 610–626 (QEEEELERILRLSLTEQ).

As to quaternary structure, interacts with EGFR (ubiquitinated); the interaction is direct and may regulate EGFR internalization.

It is found in the cell membrane. The protein resides in the late endosome. The protein localises to the early endosome. In terms of biological role, ubiquitin-binding protein that specifically recognizes and binds 'Lys-63'-linked ubiquitin. Does not bind 'Lys-48'-linked ubiquitin. Positively regulates the internalization of ligand-activated EGFR by binding to the Ub moiety of ubiquitinated EGFR at the cell membrane. The chain is Ankyrin repeat domain-containing protein 13B (ANKRD13B) from Homo sapiens (Human).